Here is a 207-residue protein sequence, read N- to C-terminus: LexA repressor (207 aa).

A DNA-binding region (H-T-H motif) is located at residues 28–48 (VREIGEAVGLASSSTVHGHLS). Residues Ser-130 and Lys-168 each act as for autocatalytic cleavage activity in the active site.

This sequence belongs to the peptidase S24 family. In terms of assembly, homodimer.

It catalyses the reaction Hydrolysis of Ala-|-Gly bond in repressor LexA.. Functionally, represses a number of genes involved in the response to DNA damage (SOS response), including recA and lexA. In the presence of single-stranded DNA, RecA interacts with LexA causing an autocatalytic cleavage which disrupts the DNA-binding part of LexA, leading to derepression of the SOS regulon and eventually DNA repair. The chain is LexA repressor from Staphylococcus haemolyticus (strain JCSC1435).